The primary structure comprises 436 residues: Citrate synthase (436 aa).

Catalysis depends on residues histidine 311 and aspartate 370.

Belongs to the citrate synthase family. Homohexamer.

It catalyses the reaction oxaloacetate + acetyl-CoA + H2O = citrate + CoA + H(+). The protein operates within carbohydrate metabolism; tricarboxylic acid cycle; isocitrate from oxaloacetate: step 1/2. Allosterically inhibited by NADH. This is Citrate synthase (gltA) from Rickettsia prowazekii (strain Madrid E).